A 168-amino-acid chain; its full sequence is Mediator of RNA polymerase II transcription subunit 31 (168 aa).

A compositionally biased stretch (acidic residues) spans 113–159; sequence EGEDQDVEESEEETVENEQKESEDEEDVVIVEKPEDEQEEQAEEAAE. Residues 113 to 168 form a disordered region; it reads EGEDQDVEESEEETVENEQKESEDEEDVVIVEKPEDEQEEQAEEAAEPTDTSLLNT.

Belongs to the Mediator complex subunit 31 family. In terms of assembly, component of the Mediator complex.

Its subcellular location is the nucleus. In terms of biological role, component of the Mediator complex, a coactivator involved in the regulated transcription of nearly all RNA polymerase II-dependent genes. Mediator functions as a bridge to convey information from gene-specific regulatory proteins to the basal RNA polymerase II transcription machinery. Mediator is recruited to promoters by direct interactions with regulatory proteins and serves as a scaffold for the assembly of a functional preinitiation complex with RNA polymerase II and the general transcription factors. In Caenorhabditis briggsae, this protein is Mediator of RNA polymerase II transcription subunit 31 (mdt-31).